The primary structure comprises 153 residues: Large ribosomal subunit protein uL15 (153 aa).

A disordered region spans residues 21-41; it reads RGIGSGKGKTGGRGIKGQKSR. Over residues 23-35 the composition is skewed to gly residues; that stretch reads IGSGKGKTGGRGI.

This sequence belongs to the universal ribosomal protein uL15 family. As to quaternary structure, part of the 50S ribosomal subunit.

Its function is as follows. Binds to the 23S rRNA. The polypeptide is Large ribosomal subunit protein uL15 (Rickettsia africae (strain ESF-5)).